We begin with the raw amino-acid sequence, 321 residues long: Methionyl-tRNA formyltransferase (321 aa).

112-115 (SILP) contacts (6S)-5,6,7,8-tetrahydrofolate.

This sequence belongs to the Fmt family.

It carries out the reaction L-methionyl-tRNA(fMet) + (6R)-10-formyltetrahydrofolate = N-formyl-L-methionyl-tRNA(fMet) + (6S)-5,6,7,8-tetrahydrofolate + H(+). Attaches a formyl group to the free amino group of methionyl-tRNA(fMet). The formyl group appears to play a dual role in the initiator identity of N-formylmethionyl-tRNA by promoting its recognition by IF2 and preventing the misappropriation of this tRNA by the elongation apparatus. This is Methionyl-tRNA formyltransferase from Shewanella piezotolerans (strain WP3 / JCM 13877).